The chain runs to 505 residues: N-succinylglutamate 5-semialdehyde dehydrogenase (505 aa).

234-239 (GSAHTG) is a binding site for NAD(+). Active-site residues include glutamate 257 and cysteine 291.

This sequence belongs to the aldehyde dehydrogenase family. AstD subfamily.

The catalysed reaction is N-succinyl-L-glutamate 5-semialdehyde + NAD(+) + H2O = N-succinyl-L-glutamate + NADH + 2 H(+). It functions in the pathway amino-acid degradation; L-arginine degradation via AST pathway; L-glutamate and succinate from L-arginine: step 4/5. In terms of biological role, catalyzes the NAD-dependent reduction of succinylglutamate semialdehyde into succinylglutamate. The chain is N-succinylglutamate 5-semialdehyde dehydrogenase from Yersinia pestis (strain Pestoides F).